The chain runs to 662 residues: F-box/WD repeat-containing protein pof10 (662 aa).

A compositionally biased stretch (polar residues) spans 1 to 16; that stretch reads MKSEPTSLDFTSSNLR. The interval 1–27 is disordered; the sequence is MKSEPTSLDFTSSNLRRMNRDHSSNNT. In terms of domain architecture, F-box spans 28–74; sequence NRTVLNLPKEILIIIFSFLDPRSLLSAQCTCKYWKKLLSDDLSWRTA. 3 WD repeats span residues 215–260, 263–302, and 429–468; these read SHAD…SLQS, FRSS…GYAR, and TAYS…FLKK. In terms of domain architecture, UIM 1 spans 581 to 600; sequence SEEEIIAYVTMLSQEEEAKR. Residues 617-645 are disordered; sequence ENDEQATSSLNALSSNHEPPQEQANVAEL. The segment covering 621–640 has biased composition (polar residues); that stretch reads QATSSLNALSSNHEPPQEQA. Residues 646–662 form the UIM 2 domain; sequence NEQEQIELAMRLSLMEM.

Part of a SCF (SKP1-cullin-F-box) protein ligase complex. Interacts with skp1.

The protein localises to the cytoplasm. Probably recognizes and binds to some phosphorylated proteins and promotes their ubiquitination and degradation. This is F-box/WD repeat-containing protein pof10 (pof10) from Schizosaccharomyces pombe (strain 972 / ATCC 24843) (Fission yeast).